The primary structure comprises 419 residues: MQTVGREARAASRTLAAASTDAKNSALVAMAQAIRDSRDALLAANAADLAEARAAGLDEALIDRLTLSAKGVEGMAAGLEQVAALPDPVGEITDVKRRPSGIQVGKMRVPLGVVGIIYEARPNVTADAAALCLKSGNAAILRGGKEALRSNQAIASCVRTGLAAAGLPQTAVQVLETTDRAAVGALITMPEFVDVIVPRGGKGLIERISSEARVPVIKHLDGNCHVYVDDHADPAKVLPIVENAKTQRYGTCNTTESLLVARAVAPRFLSDIGRMLAARNVEMRACPEALALLREAGIEGARLSPATEQDWHEEYLAPIIAIRVVAGLDEAIAHINTYSSGHTEAILTEHYTHAMRFLREVDSASVMVNASTRFADGFEYGLGAEIGISTDKIHARGPVGLEGLTSQKWIVFGNGEIRR.

Belongs to the gamma-glutamyl phosphate reductase family.

The protein resides in the cytoplasm. It catalyses the reaction L-glutamate 5-semialdehyde + phosphate + NADP(+) = L-glutamyl 5-phosphate + NADPH + H(+). Its pathway is amino-acid biosynthesis; L-proline biosynthesis; L-glutamate 5-semialdehyde from L-glutamate: step 2/2. Functionally, catalyzes the NADPH-dependent reduction of L-glutamate 5-phosphate into L-glutamate 5-semialdehyde and phosphate. The product spontaneously undergoes cyclization to form 1-pyrroline-5-carboxylate. The protein is Gamma-glutamyl phosphate reductase of Azoarcus sp. (strain BH72).